A 125-amino-acid polypeptide reads, in one-letter code: Large ribosomal subunit protein bL12 (125 aa).

Belongs to the bacterial ribosomal protein bL12 family. In terms of assembly, homodimer. Part of the ribosomal stalk of the 50S ribosomal subunit. Forms a multimeric L10(L12)X complex, where L10 forms an elongated spine to which 2 to 4 L12 dimers bind in a sequential fashion. Binds GTP-bound translation factors.

Forms part of the ribosomal stalk which helps the ribosome interact with GTP-bound translation factors. Is thus essential for accurate translation. The protein is Large ribosomal subunit protein bL12 of Anaeromyxobacter dehalogenans (strain 2CP-1 / ATCC BAA-258).